Here is a 434-residue protein sequence, read N- to C-terminus: Eukaryotic translation initiation factor 3 subunit E (434 aa).

One can recognise a PCI domain in the interval 219 to 392 (FFNHPKGRDL…GHVVMGTQPL (174 aa)).

It belongs to the eIF-3 subunit E family. In terms of assembly, component of the eukaryotic translation initiation factor 3 (eIF-3) complex. The eIF-3 complex interacts with pix. Interacts with mxt.

It is found in the cytoplasm. In terms of biological role, component of the eukaryotic translation initiation factor 3 (eIF-3) complex, which is involved in protein synthesis of a specialized repertoire of mRNAs and, together with other initiation factors, stimulates binding of mRNA and methionyl-tRNAi to the 40S ribosome. The eIF-3 complex specifically targets and initiates translation of a subset of mRNAs involved in cell proliferation. In Drosophila grimshawi (Hawaiian fruit fly), this protein is Eukaryotic translation initiation factor 3 subunit E (eIF3-S6).